The chain runs to 236 residues: MSSADFNFGDFTTTYTSPTIPAYPDTLGQLQPIQPNPQAAYPPVSQHHASHHVQHPHQPGYVLSNPPQLSGNKRKASDAMSVPPTPGARVMSFEEASRLAAEEDKRKRNTAASARFRIKKKQREQALEKSAKEMSEKVTQLEGRIQALETENKWLKGLVTEKHGSKEDILKLLREFSAHAAKVSKDAAAAAADKAEAAADKADAERAREESSFCVSTSSPSSDESVDTDNKKRRKD.

The disordered stretch occupies residues 26 to 89; sequence TLGQLQPIQP…MSVPPTPGAR (64 aa). The segment covering 28–37 has biased composition (polar residues); sequence GQLQPIQPNP. One can recognise a bZIP domain in the interval 99–162; that stretch reads LAAEEDKRKR…KWLKGLVTEK (64 aa). Residues 105-137 are basic motif; the sequence is KRKRNTAASARFRIKKKQREQALEKSAKEMSEK. The tract at residues 141–155 is leucine-zipper; that stretch reads LEGRIQALETENKWL. Positions 189-236 are disordered; it reads AAAADKAEAAADKADAERAREESSFCVSTSSPSSDESVDTDNKKRRKD. The span at 193–211 shows a compositional bias: basic and acidic residues; that stretch reads DKAEAAADKADAERAREES. The segment covering 212-223 has biased composition (low complexity); the sequence is SFCVSTSSPSSD.

Belongs to the bZIP family. GCN4 subfamily. Binds DNA as a dimer.

The protein resides in the nucleus. Functionally, turns on the expression of structural genes which encode sulfur-catabolic enzymes. Binds to sequence elements upstream of these genes. This Neurospora crassa (strain ATCC 24698 / 74-OR23-1A / CBS 708.71 / DSM 1257 / FGSC 987) protein is Regulatory protein cys-3 (cys-3).